Here is a 375-residue protein sequence, read N- to C-terminus: Peptidyl-prolyl cis-trans isomerase D (375 aa).

The region spanning 7-169 (YFDITIANEP…QAVTISSAGV (163 aa)) is the PPIase cyclophilin-type domain. TPR repeat units follow at residues 217–250 (AGKL…LDVH), 270–307 (LPLL…PNLS), and 312–345 (GKAL…VPGD).

This sequence belongs to the cyclophilin-type PPIase family. PPIase D subfamily.

It localises to the cytoplasm. It carries out the reaction [protein]-peptidylproline (omega=180) = [protein]-peptidylproline (omega=0). Functionally, PPIases accelerate the folding of proteins. It catalyzes the cis-trans isomerization of proline imidic peptide bonds in oligopeptides. The polypeptide is Peptidyl-prolyl cis-trans isomerase D (CPR6) (Cryptococcus neoformans var. neoformans serotype D (strain JEC21 / ATCC MYA-565) (Filobasidiella neoformans)).